A 1019-amino-acid polypeptide reads, in one-letter code: Macrophage colony-stimulating factor 1 receptor 2 (1019 aa).

An N-terminal signal peptide occupies residues 1–18 (MKSYCLLLSITLSCCCSA). The Extracellular segment spans residues 19-576 (EDLPDPPSIH…LREHNSAFMS (558 aa)). 3 consecutive Ig-like C2-type domains span residues 37 to 109 (QAEA…IHLY), 106 to 212 (IHLY…LLVA), and 224 to 312 (QNKA…LIVL). The cysteines at positions 52 and 92 are disulfide-linked. N-linked (GlcNAc...) asparagine glycans are attached at residues N96, N148, N169, N249, N342, N346, N355, N369, N379, N408, N422, N429, N433, and N514. Disulfide bonds link C139–C193 and C239–C294. 2 Ig-like C2-type domains span residues 383–474 (STTV…LRIY) and 487–567 (TLTC…VFHL). C490 and C552 form a disulfide bridge. Residues 577-597 (ALIGAGSTAAILFLLLLVVFY) traverse the membrane as a helical segment. Residues 598-1019 (KWRQKPKYEI…LSVTNIYQLS (422 aa)) are Cytoplasmic-facing. The interval 601-633 (QKPKYEIRWKIIESTEGNHYTFVDPTLLPYNYK) is regulatory juxtamembrane domain. Y620 carries the phosphotyrosine; by autocatalysis modification. The 323-residue stretch at 641-963 (LRLGAVLGSG…MICQLIDRLL (323 aa)) folds into the Protein kinase domain. ATP is bound by residues 647-655 (LGSGAFGKV) and K674. Phosphotyrosine; by autocatalysis occurs at positions 756 and 778. D827 serves as the catalytic Proton acceptor. Residues 845-867 (DFGLARDIQNDDSYIVQGNARLP) form an activation loop region. Y858 and Y974 each carry phosphotyrosine; by autocatalysis. Positions 970 to 1001 (NHQSYSNINETKKDDFKGGKSQRRGEEEEQRR) are disordered. Basic and acidic residues predominate over residues 979–1001 (ETKKDDFKGGKSQRRGEEEEQRR). Y1016 carries the phosphotyrosine; by autocatalysis modification.

The protein belongs to the protein kinase superfamily. Tyr protein kinase family. CSF-1/PDGF receptor subfamily. As to quaternary structure, monomer. Homodimer. Interacts with CSF1. Autophosphorylated in response to CSF1 binding. autophosphorylation, leading to its degradation. Post-translationally, ubiquitinated. Becomes rapidly polyubiquitinated after autophosphorylation, leading to its degradation.

It localises to the cell membrane. The catalysed reaction is L-tyrosyl-[protein] + ATP = O-phospho-L-tyrosyl-[protein] + ADP + H(+). With respect to regulation, present in an inactive conformation in the absence of bound ligand. CSF1 binding leads to dimerization and activation by autophosphorylation on tyrosine residues. Its function is as follows. Tyrosine-protein kinase that acts as a cell-surface receptor for CSF1 and plays an essential role in the regulation of survival, proliferation and differentiation of hematopoietic precursor cells, especially mononuclear phagocytes, such as macrophages and monocytes. Plays an important role in innate immunity and in inflammatory processes. Plays an important role in the regulation of osteoclast proliferation and differentiation, the regulation of bone resorption, and is required for normal bone development. Promotes reorganization of the actin cytoskeleton, regulates formation of membrane ruffles, cell adhesion and cell migration. Activates several signaling pathways in response to ligand binding. The sequence is that of Macrophage colony-stimulating factor 1 receptor 2 (csf1r2) from Takifugu rubripes (Japanese pufferfish).